A 122-amino-acid polypeptide reads, in one-letter code: Large ribosomal subunit protein uL14 (122 aa).

Belongs to the universal ribosomal protein uL14 family. As to quaternary structure, part of the 50S ribosomal subunit. Forms a cluster with proteins L3 and L19. In the 70S ribosome, L14 and L19 interact and together make contacts with the 16S rRNA in bridges B5 and B8.

In terms of biological role, binds to 23S rRNA. Forms part of two intersubunit bridges in the 70S ribosome. The protein is Large ribosomal subunit protein uL14 of Methylococcus capsulatus (strain ATCC 33009 / NCIMB 11132 / Bath).